The primary structure comprises 198 residues: Glycerol-3-phosphate acyltransferase (198 aa).

The next 5 membrane-spanning stretches (helical) occupy residues 2–22, 53–75, 79–98, 113–133, and 147–167; these read FITY…FALV, AGFI…PLIF, IHPL…PIFA, LLCY…TLLF, and IAAV…AMCL.

It belongs to the PlsY family. In terms of assembly, probably interacts with PlsX.

It localises to the cell membrane. It catalyses the reaction an acyl phosphate + sn-glycerol 3-phosphate = a 1-acyl-sn-glycero-3-phosphate + phosphate. The protein operates within lipid metabolism; phospholipid metabolism. Functionally, catalyzes the transfer of an acyl group from acyl-phosphate (acyl-PO(4)) to glycerol-3-phosphate (G3P) to form lysophosphatidic acid (LPA). This enzyme utilizes acyl-phosphate as fatty acyl donor, but not acyl-CoA or acyl-ACP. The sequence is that of Glycerol-3-phosphate acyltransferase from Bacillus cytotoxicus (strain DSM 22905 / CIP 110041 / 391-98 / NVH 391-98).